A 458-amino-acid chain; its full sequence is Pyruvate kinase (458 aa).

Residue arginine 33 coordinates substrate. 3 residues coordinate K(+): asparagine 35, serine 37, and aspartate 67. Residue 35 to 38 participates in ATP binding; that stretch reads NASH. ATP-binding residues include arginine 74 and lysine 148. Residue glutamate 214 participates in Mg(2+) binding. Substrate contacts are provided by glycine 237, aspartate 238, and threonine 270. Aspartate 238 provides a ligand contact to Mg(2+).

This sequence belongs to the pyruvate kinase family. As to quaternary structure, homotetramer. Requires a divalent metal cation as cofactor.

It catalyses the reaction pyruvate + ATP = phosphoenolpyruvate + ADP + H(+). The protein operates within carbohydrate degradation; glycolysis; pyruvate from D-glyceraldehyde 3-phosphate: step 5/5. With respect to regulation, not activated by classical allosteric effectors. This chain is Pyruvate kinase (pyk), found in Aeropyrum pernix (strain ATCC 700893 / DSM 11879 / JCM 9820 / NBRC 100138 / K1).